The chain runs to 340 residues: tRNA N6-adenosine threonylcarbamoyltransferase (340 aa).

The Fe cation site is built by histidine 111 and histidine 115. Substrate is bound by residues 134–138 (LVSGG), aspartate 167, glycine 180, and asparagine 276. Fe cation is bound at residue aspartate 304.

It belongs to the KAE1 / TsaD family. Fe(2+) serves as cofactor.

It is found in the cytoplasm. The catalysed reaction is L-threonylcarbamoyladenylate + adenosine(37) in tRNA = N(6)-L-threonylcarbamoyladenosine(37) in tRNA + AMP + H(+). Functionally, required for the formation of a threonylcarbamoyl group on adenosine at position 37 (t(6)A37) in tRNAs that read codons beginning with adenine. Is involved in the transfer of the threonylcarbamoyl moiety of threonylcarbamoyl-AMP (TC-AMP) to the N6 group of A37, together with TsaE and TsaB. TsaD likely plays a direct catalytic role in this reaction. The protein is tRNA N6-adenosine threonylcarbamoyltransferase of Helicobacter pylori (strain P12).